We begin with the raw amino-acid sequence, 525 residues long: Probable CoA ligase CCL9 (525 aa).

ATP-binding positions include 171–179 (TSGTTSRPK), 311–316 (EAYAMT), Asp-395, 407–410 (LVGR), and Lys-501. The segment at 242–311 (SASTFWSDMI…EESFGAPVLE (70 aa)) is SBD1. Residues 312–375 (AYAMTEAAHL…IRGPNVTKGY (64 aa)) are SBD2.

The protein belongs to the ATP-dependent AMP-binding enzyme family.

It localises to the cytoplasm. The protein localises to the cytosol. The polypeptide is Probable CoA ligase CCL9 (Humulus lupulus (European hop)).